A 390-amino-acid chain; its full sequence is tRNA-specific 2-thiouridylase MnmA (390 aa).

ATP contacts are provided by residues 36 to 43 (GMSGGVDS) and Met-62. Residues 122-124 (NPD) are interaction with target base in tRNA. Cys-127 (nucleophile) is an active-site residue. A disulfide bridge links Cys-127 with Cys-223. Residue Gly-151 coordinates ATP. An interaction with tRNA region spans residues 173-175 (KDQ). Cys-223 serves as the catalytic Cysteine persulfide intermediate. The tract at residues 335–336 (RY) is interaction with tRNA.

The protein belongs to the MnmA/TRMU family.

The protein localises to the cytoplasm. It catalyses the reaction S-sulfanyl-L-cysteinyl-[protein] + uridine(34) in tRNA + AH2 + ATP = 2-thiouridine(34) in tRNA + L-cysteinyl-[protein] + A + AMP + diphosphate + H(+). Functionally, catalyzes the 2-thiolation of uridine at the wobble position (U34) of tRNA, leading to the formation of s(2)U34. The polypeptide is tRNA-specific 2-thiouridylase MnmA (Marinomonas sp. (strain MWYL1)).